Here is a 484-residue protein sequence, read N- to C-terminus: FAD-dependent monooxygenase aurC (484 aa).

The first 21 residues, 1 to 21 (MGAYSFRVIIVGGSITGMTLA), serve as a signal peptide directing secretion. Residues Glu-35, Gly-49, and Arg-108 each coordinate FAD. The active site involves Tyr-216. Residues Asp-308 and Gly-321 each coordinate FAD. A helical transmembrane segment spans residues 451-471 (FAVASLIVLIVVLARALDSPA).

This sequence belongs to the paxM FAD-dependent monooxygenase family. Requires FAD as cofactor.

It is found in the membrane. Its pathway is polyketide biosynthesis. Functionally, FAD-dependent monooxygenase; part of the gene cluster that mediates the biosynthesis of aurovertins, fungal polyketides that exhibit potent inhibition of adenosine triphosphate synthase. Tha biosynthesis starts with the HR-PKS aurA that selects propionate as the starter unit; synthesizes a hexa-ene chain through the repeated functions of the KR and DH domains in the first six iterations; selectively introduces three alpha-methyl substitutions at C4, C6, and C16 using the S-adensylmethionine-dependent cMET; and shuts off KR and DH in the last three iterations to afford a 1,3,5-triketo portion that can undergo intramolecular cyclization to yield the alpha-pyrone intermediate. AurE may act as a cyclase and enhances the rate of pyrone formation and product release of aurA. The methyltransferase aurB then methylates the C17 hydroxyl group. C17 methylation is required to initiate epoxidation by the downstream monooxygenase aurC. The monooxygenase aurC and the epoxide hydrolase aurD can iteratively transform the terminal triene portion of the methylated precursor into the dioxabicyclo[3.2.1]octane scaffold of aurovertin E. Epoxidation modifications of the precursor occur in two separate steps; bis-epoxidation of the two terminal olefins takes place first, followed by another epoxidation that occurs at C7-C8 after tetrahydrofuran formation. The O-acyltransferase aurG converts aurovertin E to aurovertin A. The protein is FAD-dependent monooxygenase aurC of Calcarisporium arbuscula (Dendryphion arbuscula).